The chain runs to 108 residues: UPF0145 protein gll1048 (108 aa).

Belongs to the UPF0145 family.

The protein is UPF0145 protein gll1048 of Gloeobacter violaceus (strain ATCC 29082 / PCC 7421).